Consider the following 484-residue polypeptide: Glutamate--tRNA ligase (484 aa).

The short motif at 11–21 is the 'HIGH' region element; the sequence is PSPTGLLHIGN. The 'KMSKS' region motif lies at 255 to 259; it reads KLSKR. Lysine 258 contacts ATP.

This sequence belongs to the class-I aminoacyl-tRNA synthetase family. Glutamate--tRNA ligase type 1 subfamily. Monomer.

The protein localises to the cytoplasm. It carries out the reaction tRNA(Glu) + L-glutamate + ATP = L-glutamyl-tRNA(Glu) + AMP + diphosphate. In terms of biological role, catalyzes the attachment of glutamate to tRNA(Glu) in a two-step reaction: glutamate is first activated by ATP to form Glu-AMP and then transferred to the acceptor end of tRNA(Glu). This is Glutamate--tRNA ligase from Streptococcus agalactiae serotype V (strain ATCC BAA-611 / 2603 V/R).